Here is a 485-residue protein sequence, read N- to C-terminus: Ribulose bisphosphate carboxylase large chain 2 (485 aa).

2 residues coordinate substrate: asparagine 124 and threonine 174. The active-site Proton acceptor is the lysine 176. A substrate-binding site is contributed by lysine 178. Positions 202, 204, and 205 each coordinate Mg(2+). The residue at position 202 (lysine 202) is an N6-carboxylysine. The active-site Proton acceptor is the histidine 294. Residues arginine 295, histidine 327, and serine 379 each contribute to the substrate site.

This sequence belongs to the RuBisCO large chain family. Type I subfamily. As to quaternary structure, heterohexadecamer of 8 large chains and 8 small chains. Mg(2+) serves as cofactor.

It catalyses the reaction 2 (2R)-3-phosphoglycerate + 2 H(+) = D-ribulose 1,5-bisphosphate + CO2 + H2O. It carries out the reaction D-ribulose 1,5-bisphosphate + O2 = 2-phosphoglycolate + (2R)-3-phosphoglycerate + 2 H(+). Functionally, ruBisCO catalyzes two reactions: the carboxylation of D-ribulose 1,5-bisphosphate, the primary event in carbon dioxide fixation, as well as the oxidative fragmentation of the pentose substrate. Both reactions occur simultaneously and in competition at the same active site. This Rhodopseudomonas palustris (strain BisB5) protein is Ribulose bisphosphate carboxylase large chain 2.